Here is a 174-residue protein sequence, read N- to C-terminus: Peptide methionine sulfoxide reductase MsrA (174 aa).

Residue cysteine 10 is part of the active site.

The protein belongs to the MsrA Met sulfoxide reductase family.

The enzyme catalyses L-methionyl-[protein] + [thioredoxin]-disulfide + H2O = L-methionyl-(S)-S-oxide-[protein] + [thioredoxin]-dithiol. It catalyses the reaction [thioredoxin]-disulfide + L-methionine + H2O = L-methionine (S)-S-oxide + [thioredoxin]-dithiol. In terms of biological role, has an important function as a repair enzyme for proteins that have been inactivated by oxidation. Catalyzes the reversible oxidation-reduction of methionine sulfoxide in proteins to methionine. This Paenarthrobacter aurescens (strain TC1) protein is Peptide methionine sulfoxide reductase MsrA.